We begin with the raw amino-acid sequence, 697 residues long: Polyribonucleotide nucleotidyltransferase (697 aa).

Positions 488 and 494 each coordinate Mg(2+). The KH domain maps to 555–614; the sequence is PTFEVITINPDKIRDVIGKGGATIRQITEETKAAIDIEDNGTVRVFGETKAAAKAAIAKI. Residues 624–692 form the S1 motif domain; it reads GKIYDGKVIR…NRGRIKLTMK (69 aa).

The protein belongs to the polyribonucleotide nucleotidyltransferase family. Component of the RNA degradosome, which is a multiprotein complex involved in RNA processing and mRNA degradation. The cofactor is Mg(2+).

It is found in the cytoplasm. It carries out the reaction RNA(n+1) + phosphate = RNA(n) + a ribonucleoside 5'-diphosphate. Functionally, involved in mRNA degradation. Catalyzes the phosphorolysis of single-stranded polyribonucleotides processively in the 3'- to 5'-direction. In Acinetobacter baumannii (strain AB307-0294), this protein is Polyribonucleotide nucleotidyltransferase.